The sequence spans 244 residues: NAD(P)H-quinone oxidoreductase subunit K (244 aa).

C60, C61, C125, and C156 together coordinate [4Fe-4S] cluster.

The protein belongs to the complex I 20 kDa subunit family. As to quaternary structure, NDH-1 can be composed of about 15 different subunits; different subcomplexes with different compositions have been identified which probably have different functions. It depends on [4Fe-4S] cluster as a cofactor.

It localises to the cellular thylakoid membrane. The catalysed reaction is a plastoquinone + NADH + (n+1) H(+)(in) = a plastoquinol + NAD(+) + n H(+)(out). The enzyme catalyses a plastoquinone + NADPH + (n+1) H(+)(in) = a plastoquinol + NADP(+) + n H(+)(out). Its function is as follows. NDH-1 shuttles electrons from an unknown electron donor, via FMN and iron-sulfur (Fe-S) centers, to quinones in the respiratory and/or the photosynthetic chain. The immediate electron acceptor for the enzyme in this species is believed to be plastoquinone. Couples the redox reaction to proton translocation, and thus conserves the redox energy in a proton gradient. Cyanobacterial NDH-1 also plays a role in inorganic carbon-concentration. This Prochlorococcus marinus (strain MIT 9515) protein is NAD(P)H-quinone oxidoreductase subunit K.